The sequence spans 332 residues: Biotin synthase (332 aa).

Residues 51 to 278 form the Radical SAM core domain; that stretch reads RTIQLSTLMS…KSYVRLSAGR (228 aa). The [4Fe-4S] cluster site is built by Cys-66, Cys-70, and Cys-73. Residues Cys-110, Cys-141, Cys-201, and Arg-273 each coordinate [2Fe-2S] cluster.

Belongs to the radical SAM superfamily. Biotin synthase family. As to quaternary structure, homodimer. [4Fe-4S] cluster is required as a cofactor. [2Fe-2S] cluster serves as cofactor.

It catalyses the reaction (4R,5S)-dethiobiotin + (sulfur carrier)-SH + 2 reduced [2Fe-2S]-[ferredoxin] + 2 S-adenosyl-L-methionine = (sulfur carrier)-H + biotin + 2 5'-deoxyadenosine + 2 L-methionine + 2 oxidized [2Fe-2S]-[ferredoxin]. It participates in cofactor biosynthesis; biotin biosynthesis; biotin from 7,8-diaminononanoate: step 2/2. Its function is as follows. Catalyzes the conversion of dethiobiotin (DTB) to biotin by the insertion of a sulfur atom into dethiobiotin via a radical-based mechanism. This chain is Biotin synthase, found in Haemophilus influenzae (strain PittGG).